Here is a 336-residue protein sequence, read N- to C-terminus: Phospho-N-acetylmuramoyl-pentapeptide-transferase (336 aa).

The next 10 helical transmembrane spans lie at 3–23 (LTLI…PYFI), 53–73 (GGTV…LFSI), 78–98 (SLAL…IGFL), 118–138 (LALQ…PSGI), 143–163 (VFGY…FWVV), 174–194 (GIDG…GVIA), 200–220 (FDVL…FCFN), 226–246 (VFMG…ISIA), 251–271 (WTLL…MLQV), and 316–336 (AFLW…LYVF).

It belongs to the glycosyltransferase 4 family. MraY subfamily. Requires Mg(2+) as cofactor.

It localises to the cell membrane. The enzyme catalyses UDP-N-acetyl-alpha-D-muramoyl-L-alanyl-gamma-D-glutamyl-L-lysyl-D-alanyl-D-alanine + di-trans,octa-cis-undecaprenyl phosphate = Mur2Ac(oyl-L-Ala-gamma-D-Glu-L-Lys-D-Ala-D-Ala)-di-trans,octa-cis-undecaprenyl diphosphate + UMP. Its pathway is cell wall biogenesis; peptidoglycan biosynthesis. Functionally, catalyzes the initial step of the lipid cycle reactions in the biosynthesis of the cell wall peptidoglycan: transfers peptidoglycan precursor phospho-MurNAc-pentapeptide from UDP-MurNAc-pentapeptide onto the lipid carrier undecaprenyl phosphate, yielding undecaprenyl-pyrophosphoryl-MurNAc-pentapeptide, known as lipid I. The chain is Phospho-N-acetylmuramoyl-pentapeptide-transferase from Streptococcus pyogenes serotype M5 (strain Manfredo).